A 76-amino-acid chain; its full sequence is Large ribosomal subunit protein uL29 (76 aa).

The protein belongs to the universal ribosomal protein uL29 family.

This chain is Large ribosomal subunit protein uL29, found in Gloeothece citriformis (strain PCC 7424) (Cyanothece sp. (strain PCC 7424)).